A 219-amino-acid polypeptide reads, in one-letter code: Guanylate kinase (219 aa).

A Guanylate kinase-like domain is found at Gly15–Lys194. Position 22–29 (Ser22–Thr29) interacts with ATP.

It belongs to the guanylate kinase family.

The protein localises to the cytoplasm. The enzyme catalyses GMP + ATP = GDP + ADP. Functionally, essential for recycling GMP and indirectly, cGMP. The sequence is that of Guanylate kinase from Nitrobacter hamburgensis (strain DSM 10229 / NCIMB 13809 / X14).